Reading from the N-terminus, the 453-residue chain is Kynureninase (453 aa).

Pyridoxal 5'-phosphate-binding positions include L114, T115, 142–145, D232, H235, and Y257; that span reads FPSD. N6-(pyridoxal phosphate)lysine is present on K258. Position 286 (W286) interacts with pyridoxal 5'-phosphate.

The protein belongs to the kynureninase family. In terms of assembly, homodimer. Requires pyridoxal 5'-phosphate as cofactor.

The protein resides in the cytoplasm. It carries out the reaction L-kynurenine + H2O = anthranilate + L-alanine + H(+). The enzyme catalyses 3-hydroxy-L-kynurenine + H2O = 3-hydroxyanthranilate + L-alanine + H(+). Its pathway is amino-acid degradation; L-kynurenine degradation; L-alanine and anthranilate from L-kynurenine: step 1/1. It participates in cofactor biosynthesis; NAD(+) biosynthesis; quinolinate from L-kynurenine: step 2/3. Its function is as follows. Catalyzes the cleavage of L-kynurenine (L-Kyn) and L-3-hydroxykynurenine (L-3OHKyn) into anthranilic acid (AA) and 3-hydroxyanthranilic acid (3-OHAA), respectively. The chain is Kynureninase from Cryptococcus neoformans var. neoformans serotype D (strain B-3501A) (Filobasidiella neoformans).